Here is a 96-residue protein sequence, read N- to C-terminus: RNA-binding protein Hfq (96 aa).

A Sm domain is found at 9–68 (DPYLNALRRERIPVSIYLVNGIKLQGQIESFDQFVILLKNTVNQMVYKHAISTVVPARSV). Positions 67 to 96 (SVSHHNNSNNSNQQNYQQEQQTDSNVEKAE) are disordered. Residues 72–87 (NNSNNSNQQNYQQEQQ) show a composition bias toward low complexity.

This sequence belongs to the Hfq family. As to quaternary structure, homohexamer.

RNA chaperone that binds small regulatory RNA (sRNAs) and mRNAs to facilitate mRNA translational regulation in response to envelope stress, environmental stress and changes in metabolite concentrations. Also binds with high specificity to tRNAs. This Pasteurella multocida (strain Pm70) protein is RNA-binding protein Hfq.